Consider the following 394-residue polypeptide: Elongation factor Tu-A (394 aa).

A tr-type G domain is found at 10–204 (KPHVNVGTIG…HLDTYIPEPQ (195 aa)). The segment at 19 to 26 (GHVDHGKT) is G1. 19–26 (GHVDHGKT) contacts GTP. A Mg(2+)-binding site is contributed by threonine 26. The tract at residues 60 to 64 (GITIN) is G2. The G3 stretch occupies residues 81–84 (DCPG). GTP contacts are provided by residues 81 to 85 (DCPGH) and 136 to 139 (NKCD). The segment at 136 to 139 (NKCD) is G4. The G5 stretch occupies residues 174-176 (SAL).

The protein belongs to the TRAFAC class translation factor GTPase superfamily. Classic translation factor GTPase family. EF-Tu/EF-1A subfamily. In terms of assembly, monomer.

The protein localises to the cytoplasm. The enzyme catalyses GTP + H2O = GDP + phosphate + H(+). In terms of biological role, GTP hydrolase that promotes the GTP-dependent binding of aminoacyl-tRNA to the A-site of ribosomes during protein biosynthesis. This is Elongation factor Tu-A from Pasteurella multocida (strain Pm70).